Here is a 296-residue protein sequence, read N- to C-terminus: Mycothiol acetyltransferase (296 aa).

N-acetyltransferase domains lie at 8 to 146 (RSPE…PPVE) and 151 to 296 (ISVR…GPPV). Glutamate 39 is a 1D-myo-inositol 2-(L-cysteinylamino)-2-deoxy-alpha-D-glucopyranoside binding site. 76-78 (VVT) lines the acetyl-CoA pocket. 3 residues coordinate 1D-myo-inositol 2-(L-cysteinylamino)-2-deoxy-alpha-D-glucopyranoside: glutamate 178, lysine 220, and glutamate 228. Acetyl-CoA is bound by residues 232-234 (VGV) and 239-245 (QGEGLGR). Tyrosine 266 contributes to the 1D-myo-inositol 2-(L-cysteinylamino)-2-deoxy-alpha-D-glucopyranoside binding site.

This sequence belongs to the acetyltransferase family. MshD subfamily. Monomer.

The enzyme catalyses 1D-myo-inositol 2-(L-cysteinylamino)-2-deoxy-alpha-D-glucopyranoside + acetyl-CoA = mycothiol + CoA + H(+). Functionally, catalyzes the transfer of acetyl from acetyl-CoA to desacetylmycothiol (Cys-GlcN-Ins) to form mycothiol. The protein is Mycothiol acetyltransferase of Kytococcus sedentarius (strain ATCC 14392 / DSM 20547 / JCM 11482 / CCUG 33030 / NBRC 15357 / NCTC 11040 / CCM 314 / 541) (Micrococcus sedentarius).